The primary structure comprises 356 residues: UDP-N-acetylglucosamine--N-acetylmuramyl-(pentapeptide) pyrophosphoryl-undecaprenol N-acetylglucosamine transferase (356 aa).

3 residues coordinate UDP-N-acetyl-alpha-D-glucosamine: R166, S196, and Q290.

This sequence belongs to the glycosyltransferase 28 family. MurG subfamily.

It localises to the cell membrane. It carries out the reaction Mur2Ac(oyl-L-Ala-gamma-D-Glu-L-Lys-D-Ala-D-Ala)-di-trans,octa-cis-undecaprenyl diphosphate + UDP-N-acetyl-alpha-D-glucosamine = beta-D-GlcNAc-(1-&gt;4)-Mur2Ac(oyl-L-Ala-gamma-D-Glu-L-Lys-D-Ala-D-Ala)-di-trans,octa-cis-undecaprenyl diphosphate + UDP + H(+). The protein operates within cell wall biogenesis; peptidoglycan biosynthesis. In terms of biological role, cell wall formation. Catalyzes the transfer of a GlcNAc subunit on undecaprenyl-pyrophosphoryl-MurNAc-pentapeptide (lipid intermediate I) to form undecaprenyl-pyrophosphoryl-MurNAc-(pentapeptide)GlcNAc (lipid intermediate II). In Staphylococcus aureus (strain MW2), this protein is UDP-N-acetylglucosamine--N-acetylmuramyl-(pentapeptide) pyrophosphoryl-undecaprenol N-acetylglucosamine transferase.